The chain runs to 565 residues: Ubiquitin carboxyl-terminal hydrolase 21 (565 aa).

Over residues 1-14 the composition is skewed to basic and acidic residues; it reads MPQASEHRLGRTRE. Residues 1 to 103 are disordered; the sequence is MPQASEHRLG…PPPTVALPLP (103 aa). Pro residues predominate over residues 48–57; it reads MLRPLPPRPG. Residues 58–70 show a composition bias toward basic and acidic residues; it reads LPDERLKKLELGR. The Nuclear export signal motif lies at 134-152; that stretch reads ELGAALSRLALRPEPPTLR. A USP domain is found at 212 to 558; it reads VGLRNLGNTC…EGYVLFYQLM (347 aa). The active-site Nucleophile is the Cys-221. Zn(2+)-binding residues include Cys-384, Cys-387, Cys-437, and Cys-440. The Proton acceptor role is filled by His-518.

Belongs to the peptidase C19 family. USP21 subfamily. Interacts with BEND3. In terms of tissue distribution, highly expressed in heart, pancreas and skeletal muscle. Also expressed in brain, placenta, liver and kidney, and at very low level in lung.

The protein resides in the cytoplasm. It localises to the nucleus. The catalysed reaction is Thiol-dependent hydrolysis of ester, thioester, amide, peptide and isopeptide bonds formed by the C-terminal Gly of ubiquitin (a 76-residue protein attached to proteins as an intracellular targeting signal).. Deubiquitinates histone H2A, a specific tag for epigenetic transcriptional repression, thereby acting as a coactivator. Deubiquitination of histone H2A releaves the repression of di- and trimethylation of histone H3 at 'Lys-4', resulting in regulation of transcriptional initiation. Regulates gene expression via histone H2A deubiquitination. Deubiquitinates BAZ2A/TIP5 leading to its stabilization. Also capable of removing NEDD8 from NEDD8 conjugates but has no effect on Sentrin-1 conjugates. Also acts as a negative regulator of the ribosome quality control (RQC) by mediating deubiquitination of 40S ribosomal proteins RPS10/eS10 and RPS20/uS10, thereby antagonizing ZNF598-mediated 40S ubiquitination. The sequence is that of Ubiquitin carboxyl-terminal hydrolase 21 from Homo sapiens (Human).